The primary structure comprises 223 residues: Ribonuclease HII (223 aa).

The region spanning 1–219 is the RNase H type-2 domain; it reads MMIAGIDEAG…VENIREELEK (219 aa). Residues Asp7, Glu8, and Asp105 each contribute to the a divalent metal cation site.

The protein belongs to the RNase HII family. Mn(2+) serves as cofactor. It depends on Mg(2+) as a cofactor.

The protein localises to the cytoplasm. It carries out the reaction Endonucleolytic cleavage to 5'-phosphomonoester.. Endonuclease that specifically degrades the RNA of RNA-DNA hybrids. This Methanosarcina acetivorans (strain ATCC 35395 / DSM 2834 / JCM 12185 / C2A) protein is Ribonuclease HII.